Reading from the N-terminus, the 180-residue chain is Inner membrane-spanning protein YciB (180 aa).

A run of 5 helical transmembrane segments spans residues 25-45 (QNATLYMLITSVICITLCYVI), 49-69 (VSKLSIISTTVLLVSGSITLI), 76-96 (IKIKPTILYVIFGIIFLMSGI), 118-138 (IILSYRTAAFFFFMAVVNEIV), and 150-170 (FKVFGVIPVTFIFILLQLPLL).

It belongs to the YciB family.

It is found in the cell inner membrane. Plays a role in cell envelope biogenesis, maintenance of cell envelope integrity and membrane homeostasis. This Rickettsia felis (strain ATCC VR-1525 / URRWXCal2) (Rickettsia azadi) protein is Inner membrane-spanning protein YciB.